A 468-amino-acid chain; its full sequence is Zinc finger CCCH domain-containing protein 32 (468 aa).

The tract at residues 1–25 (MYARNPPLNGSQSAQAPDWTPADAD) is disordered. 5 consecutive C3H1-type zinc fingers follow at residues 45–73 (RPGAPDCAYYMRTGVCGYGNRCRYNHPRD), 90–118 (RFGEPPCQFYLKTGTCKFGASCKFHHPKN), 136–164 (REGDNECSYYLKTGQCKFGITCKFHHPQP), 289–317 (RPGEPECQYYLKTGDCKFGTSCKFHHPRD), and 335–363 (RPGVQRCTFYVQNGFCKFGSTCKFDHPMG).

It is found in the nucleus. In Arabidopsis thaliana (Mouse-ear cress), this protein is Zinc finger CCCH domain-containing protein 32.